The chain runs to 80 residues: MCYMGVNFCNKIGIDQSEFEIESSIINSIANEVLNPISFLSNKDIINVLLRKISSECDLVRKDIYRCALELVVEKTPDDL.

This is an uncharacterized protein from Shigella flexneri.